A 267-amino-acid chain; its full sequence is DNA repair protein RecO (267 aa).

This sequence belongs to the RecO family.

Functionally, involved in DNA repair and RecF pathway recombination. This is DNA repair protein RecO from Prochlorococcus marinus (strain MIT 9303).